The primary structure comprises 76 residues: Probable small nuclear ribonucleoprotein G (76 aa).

The Sm domain occupies 4-76; sequence AHPPEVKKYM…IVMVEALDRV (73 aa).

It belongs to the snRNP Sm proteins family. As to quaternary structure, interacts with the SMN complex. Core component of the spliceosomal U1, U2, U4 and U5 small nuclear ribonucleoproteins (snRNPs), the building blocks of the spliceosome. Most spliceosomal snRNPs contain a common set of Sm proteins, SNRPB, SNRPD1, SNRPD2, SNRPD3, SNRPE, SNRPF and SNRPG that assemble in a heptameric protein ring on the Sm site of the small nuclear RNA to form the core snRNP. Component of the U1 snRNP. Component of the U4/U6-U5 tri-snRNP complex. Component of the U7 snRNP complex. Component of the U11/U12 snRNPs that are part of the U12-type spliceosome.

The protein localises to the cytoplasm. It is found in the cytosol. It localises to the nucleus. Functionally, plays a role in pre-mRNA splicing as a core component of the spliceosomal U1, U2, U4 and U5 small nuclear ribonucleoproteins (snRNPs), the building blocks of the spliceosome. Component of both the pre-catalytic spliceosome B complex and activated spliceosome C complexes. Is also a component of the minor U12 spliceosome. This chain is Probable small nuclear ribonucleoprotein G, found in Drosophila melanogaster (Fruit fly).